Reading from the N-terminus, the 227-residue chain is Large ribosomal subunit protein uL3 (227 aa).

This sequence belongs to the universal ribosomal protein uL3 family. As to quaternary structure, part of the 50S ribosomal subunit. Forms a cluster with proteins L14 and L19.

In terms of biological role, one of the primary rRNA binding proteins, it binds directly near the 3'-end of the 23S rRNA, where it nucleates assembly of the 50S subunit. The polypeptide is Large ribosomal subunit protein uL3 (Persephonella marina (strain DSM 14350 / EX-H1)).